Here is a 158-residue protein sequence, read N- to C-terminus: UPF0225 protein PSEEN1229 (158 aa).

Belongs to the UPF0225 family.

The protein is UPF0225 protein PSEEN1229 of Pseudomonas entomophila (strain L48).